A 567-amino-acid polypeptide reads, in one-letter code: Proton-coupled zinc antiporter SLC30A9, mitochondrial (567 aa).

5 consecutive transmembrane segments (helical) span residues 238 to 258 (VVMV…LAWI), 313 to 333 (GVGI…MGLL), 341 to 361 (LLWA…TLLV), 391 to 411 (VILL…TCMG), and 423 to 443 (SLGS…LIYT). Positions 461–465 (LTELL) match the LXXLL motif motif.

Belongs to the cation diffusion facilitator (CDF) transporter (TC 2.A.4) family. SLC30A subfamily. In terms of assembly, interacts with GRIP1, ESR1, AR and CTNNB1.

It localises to the mitochondrion membrane. The protein localises to the nucleus. It is found in the endoplasmic reticulum. The catalysed reaction is Zn(2+)(in) + 2 H(+)(out) = Zn(2+)(out) + 2 H(+)(in). Functionally, acts as a zinc transporter involved in intracellular zinc homeostasis. Functions as a secondary coactivator for nuclear receptors by cooperating with p160 coactivators subtypes. Plays a role in transcriptional activation of Wnt-responsive genes. Its function is as follows. Mitochondrial proton-coupled zinc ion antiporter mediating the export of zinc from the mitochondria and involved in zinc homeostasis, zinc mobilization as well as mitochondrial morphology and health. In nucleus, functions as a secondary coactivator for nuclear receptors by cooperating with p160 coactivators subtypes. Plays a role in transcriptional activation of Wnt-responsive genes. This chain is Proton-coupled zinc antiporter SLC30A9, mitochondrial (Slc30a9), found in Mus musculus (Mouse).